Consider the following 477-residue polypeptide: MSAAPGLLHQELSCPLCLQLFDAPVTAECGHSFCRACLSRVAGEPAADGTVNCPCCQAPTRPQALSTNLQLARLVEGLAQVPQGHCEEHLDPLSIYCEQDRVLVCGVCASLGSHRGHRLLPAAEAHSRLKTQLPQQKLQLQEASMRKEKSVAVLEHQLTEVEETVRQFRGAVGEQLGKMRVFLAALEGSLDREAERVRSEAGVALRRELGGLHSYLEQLRQMEKVLEEVADKPQTEFLMKYCLVTSRLQKILAESPPPARLDIQLPIISDDFKFQVWRKMFRALMPALEELTFDPSSAHPSLVVSPTGRRVECSEQKAPPAGDDARQFDKAVAVVAQQLLSDGEHYWEVEVGDKPRWALGVMASEASRRGRLHAVPSQGLWLLGLRDGKTLEAHVEAKEPRALRTPERRPTRLGLYLSFGDGVLAFYDASDADALELLFAFRERLPGPVYPFFDVCWHDKGKNAQPLLLVGPDGQEA.

Residues cysteine 14, cysteine 17, cysteine 29, histidine 31, cysteine 34, cysteine 37, cysteine 53, cysteine 56, cysteine 86, histidine 89, cysteine 97, aspartate 100, cysteine 105, cysteine 108, histidine 114, and histidine 117 each contribute to the Zn(2+) site. The RING-type zinc-finger motif lies at 14–57 (CPLCLQLFDAPVTAECGHSFCRACLSRVAGEPAADGTVNCPCCQ). A B box-type zinc finger spans residues 81–122 (VPQGHCEEHLDPLSIYCEQDRVLVCGVCASLGSHRGHRLLPA). A coiled-coil region spans residues 135–232 (QQKLQLQEAS…EKVLEEVADK (98 aa)). A Phosphoserine modification is found at serine 255. One can recognise a B30.2/SPRY domain in the interval 271 to 475 (DFKFQVWRKM…PLLLVGPDGQ (205 aa)).

It belongs to the TRIM/RBCC family. Homodimer. Homooligomer; disulfide-linked. Oligomerizes on the phospholipid membrane. Interacts with DYSF and CAV3. Disulfide bond formation at Cys-242 occurs in case of membrane damage that cause the entry of the oxidized milieu of the extracellular space, resulting in homooligomerization. As to expression, muscle-specific.

The protein localises to the cell membrane. The protein resides in the sarcolemma. It localises to the cytoplasmic vesicle membrane. It carries out the reaction S-ubiquitinyl-[E2 ubiquitin-conjugating enzyme]-L-cysteine + [acceptor protein]-L-lysine = [E2 ubiquitin-conjugating enzyme]-L-cysteine + N(6)-ubiquitinyl-[acceptor protein]-L-lysine.. The protein operates within protein modification; protein ubiquitination. Its activity is regulated as follows. Specifically binds phosphatidylserine. The binding to phospholipids enhances ubiquitination activity. In terms of biological role, muscle-specific E3 ubiquitin-protein ligase that plays a central role in cell membrane repair by nucleating the assembly of the repair machinery at injury sites. Its ubiquitination activity is mediated by E2 ubiquitin-conjugating enzymes UBE2D1, UBE2D2 and UBE2D3. Acts as a sensor of oxidation: upon membrane damage, entry of extracellular oxidative environment results in disulfide bond formation and homooligomerization at the injury site. This oligomerization acts as a nucleation site for recruitment of TRIM72-containing vesicles to the injury site, leading to membrane patch formation. Probably acts upstream of the Ca(2+)-dependent membrane resealing process. Required for transport of DYSF to sites of cell injury during repair patch formation. Regulates membrane budding and exocytosis. May be involved in the regulation of the mobility of KCNB1-containing endocytic vesicles. This chain is Tripartite motif-containing protein 72, found in Oryctolagus cuniculus (Rabbit).